Consider the following 485-residue polypeptide: Alpha-amylase (485 aa).

Positions 1–18 are cleaved as a signal peptide; that stretch reads MQHLSILLVVLGSSIAFA. Gln-19 carries the post-translational modification Pyrrolidone carboxylic acid. Cys-46 and Cys-102 are disulfide-bonded. Residues Asn-116, Arg-163, and Asp-172 each contribute to the Ca(2+) site. Cys-152 and Cys-165 are oxidised to a cystine. Chloride is bound at residue Arg-200. Asp-202 acts as the Nucleophile in catalysis. His-206 is a binding site for Ca(2+). The active-site Proton donor is the Glu-238. Asn-301 is a binding site for chloride. Cysteines 369 and 375 form a disulfide. 2 N-linked (GlcNAc...) asparagine glycosylation sites follow: Asn-423 and Asn-449. Cys-440 and Cys-452 form a disulfide bridge.

It belongs to the glycosyl hydrolase 13 family. As to quaternary structure, monomer. Ca(2+) is required as a cofactor. Chloride serves as cofactor.

It catalyses the reaction Endohydrolysis of (1-&gt;4)-alpha-D-glucosidic linkages in polysaccharides containing three or more (1-&gt;4)-alpha-linked D-glucose units.. In terms of biological role, involved in the digestion of starch. The sequence is that of Alpha-amylase from Hypothenemus hampei (Coffee berry borer).